A 108-amino-acid chain; its full sequence is UPF0145 protein LCA_1282 (108 aa).

The protein belongs to the UPF0145 family.

This Latilactobacillus sakei subsp. sakei (strain 23K) (Lactobacillus sakei subsp. sakei) protein is UPF0145 protein LCA_1282.